A 56-amino-acid polypeptide reads, in one-letter code: Large ribosomal subunit protein bL33 (56 aa).

It belongs to the bacterial ribosomal protein bL33 family.

This Rickettsia typhi (strain ATCC VR-144 / Wilmington) protein is Large ribosomal subunit protein bL33.